A 178-amino-acid chain; its full sequence is UPF0302 protein BCAH187_A1683 (178 aa).

This sequence belongs to the UPF0302 family.

In Bacillus cereus (strain AH187), this protein is UPF0302 protein BCAH187_A1683.